A 903-amino-acid chain; its full sequence is MSAWTMGAQGLDKRGSFFKLIDTIASEIGELKREMVQTDISRENGLEPSETHSMVRHKDGGYSEDKDGKTCPRDSGYDSLSNRLSILDRLLHTHPIWLQLSLSEEEAAEVLQAQPPGIFLVRKSSKMQKKVLSLRLPCEFGAPLKEFTIKESTYTFSLEGSGISFADLFRLIAFYCISRDVLPFTLKLPYAISTAKTESQLEELAQLGLNFWSSSADNKPLNSPPPHRPLPSAGICPASLRQLCLINGVHSIKTRTPSELECSQTNGALCFINPLFLKVHSQDLSTGPKRPSTRTPNANGTERPRSPPPRPPPPAINSLHTSPGLSRTEPQTSMPETVNHSKHGNVALLGTKPTPIPPPRLKKQASFLEAESSAKTLTARRPSRRSEPEPELELELEMGTAGHAGGAPPRDAPGDCTRAPPPGSESQPPPCHGARQRLSDMSLSTSSSDSLEFDRSMPLYGYEADTTSSLEDYEGESDQETMAPPIKSKKKRNSSFVLPKLVKSQLRKMSGVFSSFMTPEKRMVRRIAELSRDKCTYFGCLVQDYVSFLKENKECHVSSTDMLQTIRQFMTQVKNYLSQSSELDPPIESLIPEDQIDVVLEKAMHKCILKPLKGHVEAMLKDFHTADGSWKQLKENLQLVRQRNPQELGVFAPTPDLMELEKIKLKFMTMQKMYSPEKKVMLLLRVCKLIYTVMENNSGRMYGADDFLPVLTYVIAQCDMLELDTEIEYMMELLDPSLLHGEGGYYLTSAYGALSLIKNFQEEQAARLLSSEARDTLRQWHKRRTTNRTIPSVDDFQNYLRVAFQEVNSGCTGKTLLVRPYITTEDVCQLCAEKFKVEDPEEYSLFLFVDETWQQLAEDTYPQKIKAELHSRPQPHIFHFVYKRIKSDPYGVIFQNGEDLTPS.

Residues N44–R73 are disordered. Basic and acidic residues predominate over residues R56–R73. Residues W97–Y190 enclose the SH2 domain. Disordered regions lie at residues Q282–R455 and E471–K491. The span at S306–A315 shows a compositional bias: pro residues. Polar residues predominate over residues S318–V338. Position 366 is a phosphoserine (S366). Pro residues predominate over residues A419 to C431. The segment covering S439–S450 has biased composition (low complexity). The segment at L506 to D775 is interaction with RAB5B. Phosphoserine is present on S510. T518 carries the phosphothreonine modification. The VPS9 domain occupies D627–A766. The 92-residue stretch at F796 to S887 folds into the Ras-associating domain.

Belongs to the RIN (Ras interaction/interference) family. Homotetramer; probably composed of anti-parallel linkage of two parallel dimers. Interacts with Ras. Interacts with RAB5B, with a much higher affinity for GTP-bound activated RAB5B. Does not interact with other members of the Rab family.

Its subcellular location is the cytoplasm. Functionally, ras effector protein. May function as an upstream activator and/or downstream effector for RAB5B in endocytic pathway. May function as a guanine nucleotide exchange (GEF) of RAB5B, required for activating the RAB5 proteins by exchanging bound GDP for free GTP. This Mus musculus (Mouse) protein is Ras and Rab interactor 2 (Rin2).